Here is a 1134-residue protein sequence, read N- to C-terminus: Early transcription factor large subunit homolog (1134 aa).

The region spanning 52 to 352 (KGGRAFFPCD…PNGQPLQRQQ (301 aa)) is the Helicase ATP-binding domain. 99-106 (WQTGTGKS) serves as a coordination point for ATP. The DEAH box signature appears at 281–284 (DEIH). A Helicase C-terminal domain is found at 524–725 (MMKDILSIIR…EGDKALRKHA (202 aa)).

Belongs to the DEAD box helicase family. DEAH subfamily.

The protein localises to the virion. The enzyme catalyses ATP + H2O = ADP + phosphate + H(+). Its function is as follows. Putative initation factor. The polypeptide is Early transcription factor large subunit homolog (African swine fever virus (isolate Pig/Kenya/KEN-50/1950) (ASFV)).